The primary structure comprises 322 residues: Ribonuclease Z (322 aa).

Residues His62, His64, Asp66, His67, His139, Asp210, and His268 each coordinate Zn(2+). The active-site Proton acceptor is the Asp66.

It belongs to the RNase Z family. Homodimer. Zn(2+) is required as a cofactor.

The catalysed reaction is Endonucleolytic cleavage of RNA, removing extra 3' nucleotides from tRNA precursor, generating 3' termini of tRNAs. A 3'-hydroxy group is left at the tRNA terminus and a 5'-phosphoryl group is left at the trailer molecule.. Functionally, zinc phosphodiesterase, which displays some tRNA 3'-processing endonuclease activity. Probably involved in tRNA maturation, by removing a 3'-trailer from precursor tRNA. In Nostoc sp. (strain PCC 7120 / SAG 25.82 / UTEX 2576), this protein is Ribonuclease Z.